The sequence spans 194 residues: dTTP/UTP pyrophosphatase (194 aa).

Asp-66 serves as the catalytic Proton acceptor.

The protein belongs to the Maf family. YhdE subfamily. Requires a divalent metal cation as cofactor.

It localises to the cytoplasm. The catalysed reaction is dTTP + H2O = dTMP + diphosphate + H(+). It catalyses the reaction UTP + H2O = UMP + diphosphate + H(+). Its function is as follows. Nucleoside triphosphate pyrophosphatase that hydrolyzes dTTP and UTP. May have a dual role in cell division arrest and in preventing the incorporation of modified nucleotides into cellular nucleic acids. This is dTTP/UTP pyrophosphatase from Anaeromyxobacter dehalogenans (strain 2CP-C).